Reading from the N-terminus, the 435-residue chain is Hyaluronidase-1 (435 aa).

An N-terminal signal peptide occupies residues 1–21 (MAAHLLPICALFLTLLDMAQG). Intrachain disulfides connect Cys-43/Cys-333 and Cys-207/Cys-221. N-linked (GlcNAc...) asparagine glycosylation occurs at Asn-99. Residue Glu-131 is the Proton donor of the active site. Residues Asn-216 and Asn-350 are each glycosylated (N-linked (GlcNAc...) asparagine). Residues 354–430 (GALLCSQALC…YPGWQAPWCE (77 aa)) enclose the EGF-like domain. 3 disulfide bridges follow: Cys-358/Cys-369, Cys-363/Cys-418, and Cys-420/Cys-429.

Belongs to the glycosyl hydrolase 56 family. Highly expressed in the liver, kidney and heart. Weakly expressed in lung, placenta and skeletal muscle. No expression detected in adult brain. Isoform 1 is expressed only in bladder and prostate cancer cells, G2/G3 bladder tumor tissues and lymph node specimens showing tumor invasive tumors cells. Isoform 3, isoform 4, isoform 5 and isoform 6 are expressed in normal bladder and bladder tumor tissues.

The protein resides in the secreted. Its subcellular location is the lysosome. It catalyses the reaction Random hydrolysis of (1-&gt;4)-linkages between N-acetyl-beta-D-glucosamine and D-glucuronate residues in hyaluronate.. Its function is as follows. May have a role in promoting tumor progression. May block the TGFB1-enhanced cell growth. This chain is Hyaluronidase-1 (HYAL1), found in Homo sapiens (Human).